A 163-amino-acid polypeptide reads, in one-letter code: IQ domain-containing protein F2 (163 aa).

IQ domains follow at residues 42-71 and 98-127; these read RVIA…STWI and RERA…AIYV.

The chain is IQ domain-containing protein F2 (IQCF2) from Bos taurus (Bovine).